Reading from the N-terminus, the 382-residue chain is Protein phosphatase 1A (382 aa).

G2 carries N-myristoyl glycine lipidation. Residues 23 to 291 form the PPM-type phosphatase domain; that stretch reads RYGLSSMQGW…DNMSVILICF (269 aa). Mn(2+) contacts are provided by D60, G61, D239, and D282. S375 and S377 each carry phosphoserine.

Belongs to the PP2C family. As to quaternary structure, monomer. Interacts with SMAD2; the interaction dephosphorylates SMAD2 in its C-terminal SXS motif resulting in disruption of the SMAD2/SMAD4 complex, SMAD2 nuclear export and termination of the TGF-beta-mediated signaling. Interacts with SMAD2; the interaction dephosphorylates SMAD2 in its C-terminal SXS motif resulting in disruption of the SMAD2/SMAD4 complex, SMAD2 nuclear export and termination of the TGF-beta-mediated signaling. Interacts with the phosphorylated form of IKBKB/IKKB. Mg(2+) is required as a cofactor. It depends on Mn(2+) as a cofactor. N-myristoylation is essential for the recognition of its substrates for dephosphorylation.

The protein localises to the nucleus. It is found in the cytoplasm. The protein resides in the cytosol. It localises to the membrane. The enzyme catalyses O-phospho-L-seryl-[protein] + H2O = L-seryl-[protein] + phosphate. It catalyses the reaction O-phospho-L-threonyl-[protein] + H2O = L-threonyl-[protein] + phosphate. In terms of biological role, enzyme with a broad specificity. Negatively regulates TGF-beta signaling through dephosphorylating SMAD2 and SMAD3, resulting in their dissociation from SMAD4, nuclear export of the SMADs and termination of the TGF-beta-mediated signaling. Dephosphorylates PRKAA1 and PRKAA2. Plays an important role in the termination of TNF-alpha-mediated NF-kappa-B activation through dephosphorylating and inactivating IKBKB/IKKB. This is Protein phosphatase 1A (PPM1A) from Oryctolagus cuniculus (Rabbit).